The following is a 280-amino-acid chain: Probable cell division protein WhiA (280 aa).

The segment at residues 246-279 (SLEQIAQFFERKYKVQITRSGIQHLNAKLKKLNQ) is a DNA-binding region (H-T-H motif).

Belongs to the WhiA family.

Functionally, involved in cell division and chromosome segregation. This Mycoplasma pneumoniae (strain ATCC 29342 / M129 / Subtype 1) (Mycoplasmoides pneumoniae) protein is Probable cell division protein WhiA.